A 257-amino-acid chain; its full sequence is Trans-aconitate 2-methyltransferase (257 aa).

Belongs to the methyltransferase superfamily. Tam family.

The protein localises to the cytoplasm. The catalysed reaction is trans-aconitate + S-adenosyl-L-methionine = (E)-3-(methoxycarbonyl)pent-2-enedioate + S-adenosyl-L-homocysteine. In terms of biological role, catalyzes the S-adenosylmethionine monomethyl esterification of trans-aconitate. In Sinorhizobium medicae (strain WSM419) (Ensifer medicae), this protein is Trans-aconitate 2-methyltransferase.